Consider the following 344-residue polypeptide: D-arabinose dehydrogenase [NAD(P)+] heavy chain (344 aa).

The active-site Proton donor is the Y71. H131 is a binding site for substrate. Position 151 is a phosphothreonine (T151). 241 to 295 (SPLGSHGAPNLKIPLVKKLAEKYNVTGNDLLISYHIRQGTIVIPRSLNPVRISSS) is a binding site for NADP(+).

Belongs to the aldo/keto reductase family. Heterodimer of a heavy chain and a light chain.

It localises to the cytoplasm. The catalysed reaction is D-arabinose + NADP(+) = D-arabinono-1,4-lactone + NADPH + H(+). It carries out the reaction D-arabinose + NAD(+) = D-arabinono-1,4-lactone + NADH + H(+). Its function is as follows. Catalyzes the oxidation of D-arabinose, L-xylose, L-fucose and L-galactose in the presence of NADP(+). In Saccharomyces cerevisiae (strain ATCC 204508 / S288c) (Baker's yeast), this protein is D-arabinose dehydrogenase [NAD(P)+] heavy chain (ARA1).